Reading from the N-terminus, the 542-residue chain is Sodium/hydrogen exchanger 8 (542 aa).

11 consecutive transmembrane segments (helical) span residues 55–75 (EQSS…CIIL), 79–99 (LIRY…LGIL), 118–138 (EEMF…IFES), 151–171 (IGSI…VVGG), 186–206 (NMTD…VATI), 256–276 (TFLQ…ALGT), 306–326 (AYLP…VFAF), 349–369 (LVLF…NFFR), 374–394 (TPKM…PYAL), 412–432 (TTIV…MPLI), and 446–466 (NKKD…ESEH). T471 bears the Phosphothreonine mark. Phosphoserine occurs at positions 532 and 534.

It belongs to the monovalent cation:proton antiporter 1 (CPA1) transporter (TC 2.A.36) family.

The protein localises to the golgi apparatus membrane. It localises to the golgi apparatus. It is found in the trans-Golgi network membrane. The protein resides in the endosome. Its subcellular location is the multivesicular body membrane. The protein localises to the apical cell membrane. It localises to the cytoplasmic vesicle. It is found in the secretory vesicle. The protein resides in the acrosome. The enzyme catalyses Na(+)(in) + H(+)(out) = Na(+)(out) + H(+)(in). Functionally, na(+)/H(+) antiporter. Mediates the electoneutral exchange of intracellular H(+) ions for extracellular Na(+) in 1:1 stoichiometry. Acts as an Na(+)/H(+) exchanger in the trans-Golgi. Contributes to the regulation of pH regulation of Golgi apparatus, and consequently, in protein trafficking and endosomal morphology. In germ cells, plays a crucial role in acrosome biogenesis and sperm development, probably by playing a role in the fusion of the Golgi-derived vesicles that form the acrosomal cap. Can also be active at the cell surface of specialized cells. In the small intestine, at the cell membrane, plays a major physiological role in transepithelial absorption of Na(+) and regulates intracellular pH homeostasis of intestinal epithelial cells. Acts as an important regulator of mucosal integrity in the intestine and in the stomach, could mediate the pH fluctuation necessary for mucin exocytosis or assist membrane trafficking of other proteins. Plays a role in photoreceptor survival and in the maintenance of intracellular pH homeostasis in retinal pigment epithelium (RPE cells). This Macaca fascicularis (Crab-eating macaque) protein is Sodium/hydrogen exchanger 8 (SLC9A8).